We begin with the raw amino-acid sequence, 654 residues long: Tetratricopeptide repeat protein 30 homolog (654 aa).

7 TPR repeats span residues 10–43 (EGHV…ANTR), 44–76 (AGLS…APKE), 143–176 (ADTL…GGFN), 178–210 (LVAY…GVRN), 384–417 (LAAK…YLPV), 449–483 (AVWR…HSDD), and 533–566 (CIVN…GAGG).

The protein belongs to the TTC30/dfy-1/fleer family.

It is found in the cell projection. The protein localises to the cilium. Functionally, required for polyglutamylation of axonemal tubulin in sensory cilia. Plays a role in anterograde intraflagellar transport (IFT), the process by which cilia precursors are transported from the base of the cilium to the site of their incorporation at the tip. In Drosophila pseudoobscura pseudoobscura (Fruit fly), this protein is Tetratricopeptide repeat protein 30 homolog.